The primary structure comprises 217 residues: KS1 protein (217 aa).

Residues 1 to 16 (MKLIIVLVMMLVCVYS) form the signal peptide. Over residues 24-47 (PKNHEVPAKKQFAETKVEKKKRSD) the composition is skewed to basic and acidic residues. Disordered regions lie at residues 24–58 (PKNH…DDDD) and 72–205 (EDDD…LKIK). 2 consecutive repeat copies span residues 32–81 (KKQF…VDGG) and 98–147 (KKKK…YDED). The tract at residues 32-147 (KKQFAETKVE…EEDDDCYDED (116 aa)) is 2 X 50 AA approximate repeats. Acidic residues-rich tracts occupy residues 48 to 58 (DGDEEICDDDD) and 72 to 94 (EDDD…DDCQ). Basic residues predominate over residues 98–110 (KKKKRETKPKLKK). Acidic residues predominate over residues 114–145 (DEEEEECEEDDEDCEVEVDIEECDEEDDDCYD). Positions 149 to 188 (KKKKENKLKKESKKKNSKKTVPKNAKKSSKRSTSTKKTSQ) are enriched in basic residues.

In terms of tissue distribution, expressed in tentacle-specific epithelial cells (battery cells) as well as in a small fraction of ectodermal epithelial cells in the gastric region subjacent to the tentacles (the tentacle formation region). The later cells are committed to become battery cells.

Functionally, responds to early signals of head formation in hydra. The chain is KS1 protein (KS1) from Hydra vulgaris (Hydra).